Consider the following 231-residue polypeptide: Endo-1,4-beta-xylanase A (231 aa).

The N-terminal stretch at 1-19 (MVSFKSLLVAVSALTGALA) is a signal peptide. N-linked (GlcNAc...) asparagine glycosylation is present at asparagine 32. In terms of domain architecture, GH11 spans 41 to 229 (QVTGNSEGYH…SSGSSSIYVQ (189 aa)). Glutamate 125 functions as the Nucleophile in the catalytic mechanism. The active-site Proton donor is glutamate 216.

It belongs to the glycosyl hydrolase 11 (cellulase G) family.

The protein localises to the secreted. It carries out the reaction Endohydrolysis of (1-&gt;4)-beta-D-xylosidic linkages in xylans.. Its pathway is glycan degradation; xylan degradation. With respect to regulation, inhibited by the proteinaceous endoxylanase inhibitor I from T.aestivum (TAXI-I). Functionally, endo-1,4-beta-xylanase involved in the hydrolysis of xylan, a major structural heterogeneous polysaccharide found in plant biomass representing the second most abundant polysaccharide in the biosphere, after cellulose. Plays an important role in causing fusarium head blight (FHB) on cereal crops. The protein is Endo-1,4-beta-xylanase A (XYLA) of Gibberella zeae (strain ATCC MYA-4620 / CBS 123657 / FGSC 9075 / NRRL 31084 / PH-1) (Wheat head blight fungus).